An 893-amino-acid chain; its full sequence is DNA mismatch repair protein MutS (893 aa).

631–638 (GPNMAGKS) is an ATP binding site. A disordered region spans residues 821-858 (AGRPRVAVRQPQGGRRGASTGQLGLFGMEPAQGGTGVT).

This sequence belongs to the DNA mismatch repair MutS family.

Its function is as follows. This protein is involved in the repair of mismatches in DNA. It is possible that it carries out the mismatch recognition step. This protein has a weak ATPase activity. This chain is DNA mismatch repair protein MutS, found in Myxococcus xanthus (strain DK1622).